A 379-amino-acid chain; its full sequence is Leukocyte elastase inhibitor A (379 aa).

A Phosphoserine modification is found at Ser300.

Belongs to the serpin family. Ov-serpin subfamily. Monomer.

It is found in the secreted. Its subcellular location is the cytoplasm. The protein localises to the cytolytic granule. The protein resides in the early endosome. Its function is as follows. Regulates the activity of the neutrophil proteases. The polypeptide is Leukocyte elastase inhibitor A (Serpinb1a) (Rattus norvegicus (Rat)).